The following is a 92-amino-acid chain: Small ribosomal subunit protein uS19 (92 aa).

The protein belongs to the universal ribosomal protein uS19 family.

Protein S19 forms a complex with S13 that binds strongly to the 16S ribosomal RNA. In Proteus mirabilis (strain HI4320), this protein is Small ribosomal subunit protein uS19.